The chain runs to 200 residues: Adenylyl-sulfate kinase (200 aa).

Residue 36–43 (GLSGSGKS) participates in ATP binding. S110 functions as the Phosphoserine intermediate in the catalytic mechanism.

The protein belongs to the APS kinase family.

It carries out the reaction adenosine 5'-phosphosulfate + ATP = 3'-phosphoadenylyl sulfate + ADP + H(+). The protein operates within sulfur metabolism; hydrogen sulfide biosynthesis; sulfite from sulfate: step 2/3. Functionally, catalyzes the synthesis of activated sulfate. The polypeptide is Adenylyl-sulfate kinase (Clostridium acetobutylicum (strain ATCC 824 / DSM 792 / JCM 1419 / IAM 19013 / LMG 5710 / NBRC 13948 / NRRL B-527 / VKM B-1787 / 2291 / W)).